A 404-amino-acid polypeptide reads, in one-letter code: Argininosuccinate synthase (404 aa).

ATP is bound by residues 10–18 (AYSGGVDTS) and alanine 38. An L-citrulline-binding site is contributed by tyrosine 89. Glycine 119 is an ATP binding site. L-aspartate contacts are provided by threonine 121, asparagine 125, and aspartate 126. Asparagine 125 is a binding site for L-citrulline. L-citrulline contacts are provided by arginine 129, serine 177, serine 186, glutamate 262, and tyrosine 274.

This sequence belongs to the argininosuccinate synthase family. Type 1 subfamily. Homotetramer.

Its subcellular location is the cytoplasm. The enzyme catalyses L-citrulline + L-aspartate + ATP = 2-(N(omega)-L-arginino)succinate + AMP + diphosphate + H(+). Its pathway is amino-acid biosynthesis; L-arginine biosynthesis; L-arginine from L-ornithine and carbamoyl phosphate: step 2/3. The sequence is that of Argininosuccinate synthase from Prochlorococcus marinus (strain MIT 9312).